A 310-amino-acid chain; its full sequence is MPEQGPRMNGFSLGELCWLFCCPPCPSRIAAKLAFLPPEPTYTVREMEAPAGTAQPPREEGSGEPAACSLHLSERADWQYSQRELDAVEVFRWRTERGSCLGCMFVRCSPGSRYTVLFSHGNAVDLGQMCSFYIGLGTRINCNIFSYDYSGYGVSSGKPSEKNLYADIEAAWHALRTRYGVTPENIILYGQSIGTVPTVDLASRYECAAVILHSPLMSGLRVAFPDTRKTYCFDAFPSIDKISKVTSPVLIIHGTEDEVIDFSHGLAMYERCPRAVEPLWVEGAGHNDIELYAQYLERLKQFISHELPNS.

Catalysis depends on charge relay system residues serine 192, aspartate 257, and histidine 286.

It belongs to the AB hydrolase superfamily. ABHD17 family. Post-translationally, palmitoylated on cysteine residues located in a cysteine cluster at the N-terminus which promotes membrane localization.

It localises to the recycling endosome membrane. The protein resides in the cell projection. Its subcellular location is the dendritic spine. The protein localises to the postsynaptic density membrane. The enzyme catalyses S-hexadecanoyl-L-cysteinyl-[protein] + H2O = L-cysteinyl-[protein] + hexadecanoate + H(+). In terms of biological role, hydrolyzes fatty acids from S-acylated cysteine residues in proteins. This chain is Alpha/beta hydrolase domain-containing protein 17C, found in Xenopus tropicalis (Western clawed frog).